We begin with the raw amino-acid sequence, 477 residues long: Dihydrolipoyl dehydrogenase (477 aa).

FAD is bound by residues 34–49 (EKYK…GGTC), Lys-58, and Gly-122. An intrachain disulfide couples Cys-49 to Cys-54. NAD(+) is bound by residues 188-192 (GAGVI), Glu-211, Val-245, and 276-279 (AVGR). Asp-319 and Ala-327 together coordinate FAD. His-451 functions as the Proton acceptor in the catalytic mechanism.

Belongs to the class-I pyridine nucleotide-disulfide oxidoreductase family. In terms of assembly, homodimer. Requires FAD as cofactor.

The protein localises to the cytoplasm. The catalysed reaction is N(6)-[(R)-dihydrolipoyl]-L-lysyl-[protein] + NAD(+) = N(6)-[(R)-lipoyl]-L-lysyl-[protein] + NADH + H(+). In terms of biological role, the pyruvate dehydrogenase complex catalyzes the overall conversion of pyruvate to acetyl-CoA and CO(2). It contains multiple copies of three enzymatic components: pyruvate dehydrogenase (E1), dihydrolipoamide acetyltransferase (E2) and lipoamide dehydrogenase (E3). The protein is Dihydrolipoyl dehydrogenase of Azotobacter vinelandii.